The primary structure comprises 810 residues: Protein kinase C-binding protein NELL1 (810 aa).

The first 21 residues, 1-21, serve as a signal peptide directing secretion; it reads MPMDLILVVWFCVCTARTVVG. Residues N40, N53, N83, N224, N294, and N372 are each glycosylated (N-linked (GlcNAc...) asparagine). In terms of domain architecture, Laminin G-like spans 64–227; it reads EREIHAAPHV…TQCPNLNHTC (164 aa). A VWFC 1 domain is found at 271 to 332; that stretch reads KTCQVSGLLY…IAGQCCKVCR (62 aa). 3 disulfides stabilise this stretch: C395/C407, C401/C416, and C418/C432. 3 residues coordinate Ca(2+): D434, I435, and E437. In terms of domain architecture, EGF-like 1; calcium-binding spans 434 to 475; the sequence is DIDECAAKMHYCHANTVCVNLPGLYRCDCVPGYIRVDDFSCT. 15 disulfide bridges follow: C438-C451, C445-C460, C462-C474, C480-C493, C487-C502, C504-C515, C519-C529, C523-C535, C537-C546, C553-C566, C560-C575, C577-C594, C600-C613, C607-C622, and C624-C630. Residues N453, L454, and L457 each contribute to the Ca(2+) site. Positions 476 to 516 constitute an EGF-like 2; calcium-binding domain; it reads EHDECGSGQHNCDENAICTNTVQGHSCTCKPGYVGNGTICR. N-linked (GlcNAc...) asparagine glycosylation is present at N511. Residues 517-547 form the EGF-like 3 domain; the sequence is AFCEEGCRYGGTCVAPNKCVCPSGFTGSHCE. Positions 549–587 constitute an EGF-like 4; calcium-binding domain; the sequence is DIDECSEGIIECHNHSRCVNLPGWYHCECRSGFHDDGTY. N562 carries N-linked (GlcNAc...) asparagine glycosylation. An EGF-like 5; calcium-binding domain is found at 596-631; that stretch reads DIDECALRTHTCWNDSACINLAGGFDCLCPSGPSCS. Residue N609 is glycosylated (N-linked (GlcNAc...) asparagine). A VWFC 2 domain is found at 692–750; sequence SQCLDQNGHKLYRSGDNWTHSCQQCRCLEGEVDCWPLTCPNLSCEYTAILEGECCPRCV. N708, N732, and N758 each carry an N-linked (GlcNAc...) asparagine glycan.

In terms of assembly, homotrimer. Binds to PKC beta-1. Interacts with ATRAID; the interaction promotes osteoblast cell differentiation and mineralization. Interacts with ROBO3.

The protein localises to the cytoplasm. It localises to the nucleus envelope. It is found in the secreted. In terms of biological role, plays a role in the control of cell growth and differentiation. Promotes osteoblast cell differentiation and terminal mineralization. The protein is Protein kinase C-binding protein NELL1 (NELL1) of Homo sapiens (Human).